Consider the following 422-residue polypeptide: Nucleoside transporter 1 (422 aa).

The Cytoplasmic segment spans residues 1–38; it reads MSTGKESSKAYADIESRGDYKDDGKKGSTLSSKQHFML. Residues 39-59 traverse the membrane as a helical segment; it reads SLTFILIGLSSLNVWNTALGL. Inosine is bound at residue Trp53. Residues 60–63 are Extracellular-facing; sequence NINF. Residues 64 to 82 form a helical membrane-spanning segment; sequence KYNTFQITGLVCSSIVALF. Residues 83 to 87 lie on the Cytoplasmic side of the membrane; it reads VEIPK. Residues 88–107 form a helical membrane-spanning segment; it reads IMLPFLLGGLSILCAGFQIS. Over 108-116 the chain is Extracellular; the sequence is HSFFTDTQF. A helical membrane pass occupies residues 117–139; that stretch reads DTYCLVAFIVIGVVAGLAQTIAF. An inosine-binding site is contributed by Gln135. The Cytoplasmic segment spans residues 140-149; that stretch reads NIGSTMEDNM. The chain crosses the membrane as a helical span at residues 150 to 174; sequence GGYMSAGIGISGVFIFVINLLLDQF. The Extracellular portion of the chain corresponds to 175–185; it reads VSPEKHYGVNK. A helical transmembrane segment spans residues 186–208; it reads AKLLYLYIICELCLILAIVFCVC. Topologically, residues 209 to 241 are cytoplasmic; sequence NLDLTNKNNKKDEENKENNATLSYMELFKDSYK. The helical transmembrane segment at 242–265 threads the bilayer; it reads AILTMFLVNWLTLQLFPGVGHKKW. Residues 266-274 are Extracellular-facing; that stretch reads QESHNISDY. Residues 275–294 traverse the membrane as a helical segment; the sequence is NVTIIVGMFQVFDFLSRYPP. Positions 287 and 291 each coordinate inosine. Topologically, residues 295–309 are cytoplasmic; it reads NLTHIKIFKNFTFSL. Residues 310–330 form a helical membrane-spanning segment; the sequence is NKLLVANSLRLLFIPWFILNA. Topologically, residues 331-338 are extracellular; the sequence is CVDHPFFK. The chain crosses the membrane as a helical span at residues 339-362; it reads NIVQQCVCMAMLAFTNGWFNTVPF. At 363-374 the chain is on the cytoplasmic side; sequence LVFVKELKKAKK. A helical transmembrane segment spans residues 375–397; it reads KKEIEIISTFLVIAMFVGLFCGI. At 398 to 422 the chain is on the extracellular side; that stretch reads WTTYIYNLFNIVLPKPDLPPIDVTQ.

This sequence belongs to the SLC29A/ENT transporter (TC 2.A.57) family.

The protein localises to the cell membrane. It catalyses the reaction inosine(in) = inosine(out). It carries out the reaction adenosine(in) = adenosine(out). The catalysed reaction is hypoxanthine(out) = hypoxanthine(in). The enzyme catalyses guanosine(in) = guanosine(out). It catalyses the reaction guanine(out) = guanine(in). It carries out the reaction thymidine(in) = thymidine(out). The catalysed reaction is uridine(out) = uridine(in). The enzyme catalyses uracil(in) = uracil(out). It catalyses the reaction thymine(out) = thymine(in). It carries out the reaction adenine(out) = adenine(in). The catalysed reaction is cytosine(out) = cytosine(in). The enzyme catalyses xanthine(out) = xanthine(in). GSK4 (5-methyl-N-[2-(2-oxo-1-azepanyl)ethyl]-2-phenyl-1,3-oxazole-4-carbox-amide) disrupts the transport activity at 500 nM. Inhibited partially by 10 uM dipyridamole. Inhibited partially by N,N'-1,3-benzothiazole-2,6-diyldi(2-furamide), 2-bromo-N-(4-[1,3]oxazolo[4,5-b]pyridin-2-ylphenyl)benzamide, 4-methyl-7-[(3,4,5-trimethoxybenzyl)oxy]-2H-chromen-2-one, 2-(1-methyl-1H-indol-3-yl)-2-oxo-N-[4-(pyrrolidin-1-ylcarbonyl)phenyl]acet amide and 2-[2-(2-methylphenyl)vinyl]-4(3H)-quinazolinone. Sodium-independent nucleoside and nucleobase transporter with a broad substrate specificity. Plays a key role in the utilization of host purine sources by P.falciparum during intraerythrocytic development enabling parasite growth in the presence of physiological concentrations of adenosine, inosine, guanine, guanosine, xanthine and hypoxanthine. Essential for parasite transition from ring to trophozoite or from trophozoite to schizont stage but not for erythrocyte invasion by merozoites. The polypeptide is Nucleoside transporter 1 (Plasmodium falciparum (isolate 3D7)).